Here is a 612-residue protein sequence, read N- to C-terminus: Dihydroxy-acid dehydratase (612 aa).

D81 contributes to the Mg(2+) binding site. Residue C122 coordinates [2Fe-2S] cluster. Residues D123 and K124 each contribute to the Mg(2+) site. Position 124 is an N6-carboxylysine (K124). C195 serves as a coordination point for [2Fe-2S] cluster. Residue E491 coordinates Mg(2+). S517 acts as the Proton acceptor in catalysis.

Belongs to the IlvD/Edd family. In terms of assembly, homodimer. [2Fe-2S] cluster is required as a cofactor. Requires Mg(2+) as cofactor.

It catalyses the reaction (2R)-2,3-dihydroxy-3-methylbutanoate = 3-methyl-2-oxobutanoate + H2O. The enzyme catalyses (2R,3R)-2,3-dihydroxy-3-methylpentanoate = (S)-3-methyl-2-oxopentanoate + H2O. The protein operates within amino-acid biosynthesis; L-isoleucine biosynthesis; L-isoleucine from 2-oxobutanoate: step 3/4. Its pathway is amino-acid biosynthesis; L-valine biosynthesis; L-valine from pyruvate: step 3/4. Its function is as follows. Functions in the biosynthesis of branched-chain amino acids. Catalyzes the dehydration of (2R,3R)-2,3-dihydroxy-3-methylpentanoate (2,3-dihydroxy-3-methylvalerate) into 2-oxo-3-methylpentanoate (2-oxo-3-methylvalerate) and of (2R)-2,3-dihydroxy-3-methylbutanoate (2,3-dihydroxyisovalerate) into 2-oxo-3-methylbutanoate (2-oxoisovalerate), the penultimate precursor to L-isoleucine and L-valine, respectively. The protein is Dihydroxy-acid dehydratase of Psychromonas ingrahamii (strain DSM 17664 / CCUG 51855 / 37).